The sequence spans 138 residues: Acidic phospholipase A2 (138 aa).

Positions 1-16 (MRTLWIVAVLLLGVEG) are cleaved as a signal peptide. Cystine bridges form between Cys-42–Cys-131, Cys-44–Cys-60, Cys-59–Cys-111, Cys-65–Cys-138, Cys-66–Cys-104, Cys-73–Cys-97, and Cys-91–Cys-102. The Ca(2+) site is built by Tyr-43, Gly-45, and Gly-47. His-63 is a catalytic residue. Asp-64 is a Ca(2+) binding site. Residue Asp-105 is part of the active site.

It belongs to the phospholipase A2 family. Group II subfamily. D49 sub-subfamily. As to quaternary structure, homodimer. Requires Ca(2+) as cofactor. In terms of tissue distribution, expressed by the venom gland.

The protein localises to the secreted. It catalyses the reaction a 1,2-diacyl-sn-glycero-3-phosphocholine + H2O = a 1-acyl-sn-glycero-3-phosphocholine + a fatty acid + H(+). Functionally, PLA2 catalyzes the calcium-dependent hydrolysis of the 2-acyl groups in 3-sn-phosphoglycerides. This chain is Acidic phospholipase A2, found in Crotalus atrox (Western diamondback rattlesnake).